Here is a 113-residue protein sequence, read N- to C-terminus: Dolichyl-diphosphooligosaccharide--protein glycosyltransferase subunit DAD1 (113 aa).

At S2 the chain carries N-acetylserine. The Cytoplasmic segment spans residues 2-30 (SASVVSVISRFLEEYLSSTPQRLKLLDAY). The chain crosses the membrane as a helical span at residues 31–51 (LLYILLTGALQFGYCLLVGTF). Residue P52 is a topological domain, lumenal. Residues 53-73 (FNSFLSGFISCVGSFILAVCL) form a helical membrane-spanning segment. Topologically, residues 74-92 (RIQINPQNKADFQGISPER) are cytoplasmic. Residues 93–113 (AFADFLFASTILHLVVMNFVG) traverse the membrane as a helical segment.

It belongs to the DAD/OST2 family. Component of the oligosaccharyltransferase (OST) complex. OST exists in two different complex forms which contain common core subunits RPN1, RPN2, OST48, OST4, DAD1 and TMEM258, either STT3A or STT3B as catalytic subunits, and form-specific accessory subunits. STT3A complex assembly occurs through the formation of 3 subcomplexes. Subcomplex 1 contains RPN1 and TMEM258, subcomplex 2 contains the STT3A-specific subunits STT3A, DC2/OSTC, and KCP2 as well as the core subunit OST4, and subcomplex 3 contains RPN2, DAD1, and OST48. The STT3A complex can form stable complexes with the Sec61 complex or with both the Sec61 and TRAP complexes.

The protein localises to the endoplasmic reticulum membrane. Its pathway is protein modification; protein glycosylation. Its function is as follows. Subunit of the oligosaccharyl transferase (OST) complex that catalyzes the initial transfer of a defined glycan (Glc(3)Man(9)GlcNAc(2) in eukaryotes) from the lipid carrier dolichol-pyrophosphate to an asparagine residue within an Asn-X-Ser/Thr consensus motif in nascent polypeptide chains, the first step in protein N-glycosylation. N-glycosylation occurs cotranslationally and the complex associates with the Sec61 complex at the channel-forming translocon complex that mediates protein translocation across the endoplasmic reticulum (ER). All subunits are required for a maximal enzyme activity. The polypeptide is Dolichyl-diphosphooligosaccharide--protein glycosyltransferase subunit DAD1 (Mus musculus (Mouse)).